Reading from the N-terminus, the 353-residue chain is G-protein coupled estrogen receptor 1 (353 aa).

Residues Met-1–Tyr-40 are Extracellular-facing. Residues Ile-41 to Gly-61 form a helical membrane-spanning segment. The Cytoplasmic portion of the chain corresponds to Asn-62–Leu-81. A helical membrane pass occupies residues Tyr-82–Phe-102. The Extracellular portion of the chain corresponds to Asn-103–Ala-112. A helical transmembrane segment spans residues Val-113–Leu-133. A disulfide bridge connects residues Cys-115 and Cys-192. Over Thr-134 to Lys-160 the chain is Cytoplasmic. Residues Leu-161 to Val-181 form a helical membrane-spanning segment. Topologically, residues Gln-182 to Leu-202 are extracellular. The helical transmembrane segment at Glu-203–Val-223 threads the bilayer. Over Arg-224–Met-245 the chain is Cytoplasmic. A helical membrane pass occupies residues Ile-246 to Ile-266. Residues Gln-267 to His-292 are Extracellular-facing. The chain crosses the membrane as a helical span at residues Ile-293–Gly-313. Over Glu-314–Val-353 the chain is Cytoplasmic.

Belongs to the G-protein coupled receptor 1 family. Homodimer. Heterodimer. Expressed in brain regions that are known to control reproduction and sex behavior. Expressed in ovary, muscle and intestine. Expressed in early germ cells of the testis, including the spermatogonia, spermatocytes, and somatic cells such as Sertoli cells.

The protein resides in the nucleus. It localises to the cytoplasm. The protein localises to the perinuclear region. It is found in the cytoskeleton. Its subcellular location is the cytoplasmic vesicle membrane. The protein resides in the cell membrane. It localises to the basolateral cell membrane. The protein localises to the endoplasmic reticulum membrane. It is found in the early endosome. Its subcellular location is the recycling endosome. The protein resides in the golgi apparatus. It localises to the trans-Golgi network. The protein localises to the golgi apparatus membrane. It is found in the cell projection. Its subcellular location is the dendrite. The protein resides in the dendritic spine membrane. It localises to the axon. The protein localises to the postsynaptic density. It is found in the mitochondrion membrane. Its function is as follows. Membrane G-protein coupled estrogen receptor that binds to 17-beta-estradiol (E2) with high affinity, leading to rapid and transient activation of numerous intracellular signaling pathways. Plays a role in the embryonic development of sensory and motor neurons. Specifically induces apoptosis and reduces proliferation of brain cells. Involved in maintenance of meiotic arrest in oocytes. The chain is G-protein coupled estrogen receptor 1 (gper1) from Danio rerio (Zebrafish).